A 245-amino-acid polypeptide reads, in one-letter code: UPF0246 protein Ldb2075 (245 aa).

Belongs to the UPF0246 family.

This Lactobacillus delbrueckii subsp. bulgaricus (strain ATCC 11842 / DSM 20081 / BCRC 10696 / JCM 1002 / NBRC 13953 / NCIMB 11778 / NCTC 12712 / WDCM 00102 / Lb 14) protein is UPF0246 protein Ldb2075.